The primary structure comprises 274 residues: Shikimate dehydrogenase (NADP(+)) (274 aa).

Residues 15–17 (SKS) and Thr-62 contribute to the shikimate site. The Proton acceptor role is filled by Lys-66. Residue Asp-78 participates in NADP(+) binding. Shikimate contacts are provided by Asn-87 and Asp-102. NADP(+)-binding positions include 127–131 (GAGGA) and Met-215. Tyr-217 lines the shikimate pocket. Gly-239 contributes to the NADP(+) binding site.

This sequence belongs to the shikimate dehydrogenase family. In terms of assembly, homodimer.

The catalysed reaction is shikimate + NADP(+) = 3-dehydroshikimate + NADPH + H(+). The protein operates within metabolic intermediate biosynthesis; chorismate biosynthesis; chorismate from D-erythrose 4-phosphate and phosphoenolpyruvate: step 4/7. Involved in the biosynthesis of the chorismate, which leads to the biosynthesis of aromatic amino acids. Catalyzes the reversible NADPH linked reduction of 3-dehydroshikimate (DHSA) to yield shikimate (SA). The chain is Shikimate dehydrogenase (NADP(+)) from Dechloromonas aromatica (strain RCB).